Here is a 5087-residue protein sequence, read N- to C-terminus: Nonribosomal peptide synthetase sidC (5087 aa).

Residues 165 to 563 (HEMVRHTGNE…NGELQCMGRI (399 aa)) are adenylation 1. The Carrier 1 domain occupies 671–744 (EPAGDIEQKI…KMAALVLKSQ (74 aa)). S705 carries the O-(pantetheine 4'-phosphoryl)serine modification. The interval 782–1112 (DIIPCSPIQT…LFDTLFVWQD (331 aa)) is condensation 1. Positions 1217-1611 (ELAKTDSERI…GRRDDLVKIR (395 aa)) are adenylation 2. The Carrier 2 domain occupies 1740 to 1817 (ENLTDNEAKV…RLTRKISQSI (78 aa)). The residue at position 1777 (S1777) is an O-(pantetheine 4'-phosphoryl)serine. Residues 1855–2272 (KILPCTSLQE…RVMDFSLVES (418 aa)) are condensation 2. The Carrier 3 domain occupies 2302–2378 (EEWSAESLEI…EIASVLQGSK (77 aa)). S2339 carries the O-(pantetheine 4'-phosphoryl)serine modification. The interval 2419 to 2831 (PCTTPQAGML…STSSSLDTAS (413 aa)) is condensation 3. The interval 2860–3258 (ATRHPSRVAL…GRIDDQVKLR (399 aa)) is adenylation 3. Positions 3387 to 3464 (TEDTDTIRKI…LLAKAVESPD (78 aa)) constitute a Carrier 4 domain. O-(pantetheine 4'-phosphoryl)serine is present on S3424. The interval 3506 to 3910 (ITPCTSLQDG…RSLVEEPFSN (405 aa)) is condensation 4. Residues 3943 to 4019 (FQWSQAASLL…TMMAEVTVNG (77 aa)) form the Carrier 5 domain. O-(pantetheine 4'-phosphoryl)serine is present on S3980. Residues 4051–4416 (EHIYPATPLQ…EYSICVELEA (366 aa)) are condensation 5. A Carrier 6 domain is found at 4496 to 4569 (SLLEERIRDT…KMAEIVNSAR (74 aa)). S4530 carries the post-translational modification O-(pantetheine 4'-phosphoryl)serine. Residues 4610 to 4913 (FLPATAGQVY…IQSDLHEIGS (304 aa)) are condensation 6. Residues 5013-5048 (DVYKVSPPGSQLSQDSPEKQEANNKPSPQPSVDIEA) form a disordered region.

Belongs to the NRP synthetase family.

Its pathway is siderophore biosynthesis. Its function is as follows. Nonribosomal peptide synthetase; part of the siderophore biosynthetic pathway. Arthroderma benhamiae produces 2 types of extracellular siderophores, ferrichrome C and ferricrocin. The biosynthesis of these siderophores depends on the hydroxylation of ornithine to N(5)-hydroxyornithine, catalyzed by the monooxygenase sidA. The structure of ferricrocin differs from ferrichrome C only by a serine for alanine substitution and the assembly of both siderophores is suggested to be performed by the nonribosomal peptide synthase (NRPS) sidC. This chain is Nonribosomal peptide synthetase sidC, found in Arthroderma benhamiae (strain ATCC MYA-4681 / CBS 112371) (Trichophyton mentagrophytes).